We begin with the raw amino-acid sequence, 102 residues long: NADH-quinone oxidoreductase subunit K 1 (102 aa).

Transmembrane regions (helical) follow at residues 3–23 (TLTT…LGIL), 29–49 (VGML…FMAF), and 62–82 (IIAL…LSII).

The protein belongs to the complex I subunit 4L family. As to quaternary structure, NDH-1 is composed of 14 different subunits. Subunits NuoA, H, J, K, L, M, N constitute the membrane sector of the complex.

It localises to the cell inner membrane. The catalysed reaction is a quinone + NADH + 5 H(+)(in) = a quinol + NAD(+) + 4 H(+)(out). NDH-1 shuttles electrons from NADH, via FMN and iron-sulfur (Fe-S) centers, to quinones in the respiratory chain. The immediate electron acceptor for the enzyme in this species is believed to be ubiquinone. Couples the redox reaction to proton translocation (for every two electrons transferred, four hydrogen ions are translocated across the cytoplasmic membrane), and thus conserves the redox energy in a proton gradient. This chain is NADH-quinone oxidoreductase subunit K 1, found in Syntrophobacter fumaroxidans (strain DSM 10017 / MPOB).